The sequence spans 437 residues: tRNA pseudouridine synthase Pus10 (437 aa).

The region spanning 76–198 (VARDVVEHLS…GGGVDIQVNS (123 aa)) is the THUMP domain. The active-site Nucleophile is the D253. Residues Y321 and Y394 each contribute to the substrate site.

It belongs to the pseudouridine synthase Pus10 family.

It catalyses the reaction uridine(54) in tRNA = pseudouridine(54) in tRNA. The enzyme catalyses uridine(55) in tRNA = pseudouridine(55) in tRNA. Functionally, responsible for synthesis of pseudouridine from uracil-54 and uracil-55 in the psi GC loop of transfer RNAs. This chain is tRNA pseudouridine synthase Pus10, found in Aeropyrum pernix (strain ATCC 700893 / DSM 11879 / JCM 9820 / NBRC 100138 / K1).